The chain runs to 193 residues: MYNPTVIDNNGKSERAYDIYSRLLKDRIIFVGTAIDETVANSIIAQLLYLEAEDPEKDIIMYINSPGGSVTDGMAIYDTMNYIKPDVQTVCVGQAASMGAFLLAAGAKGKRFALENSRIMIHQPLISGGLKGQATDISIHANELLKIKDRLAELLAKNTGKTKEQILRDTERDNYLSSEEAVNYGLIDSVFRR.

Serine 97 functions as the Nucleophile in the catalytic mechanism. The active site involves histidine 122.

This sequence belongs to the peptidase S14 family. As to quaternary structure, fourteen ClpP subunits assemble into 2 heptameric rings which stack back to back to give a disk-like structure with a central cavity, resembling the structure of eukaryotic proteasomes.

It localises to the cytoplasm. It catalyses the reaction Hydrolysis of proteins to small peptides in the presence of ATP and magnesium. alpha-casein is the usual test substrate. In the absence of ATP, only oligopeptides shorter than five residues are hydrolyzed (such as succinyl-Leu-Tyr-|-NHMec, and Leu-Tyr-Leu-|-Tyr-Trp, in which cleavage of the -Tyr-|-Leu- and -Tyr-|-Trp bonds also occurs).. Cleaves peptides in various proteins in a process that requires ATP hydrolysis. Has a chymotrypsin-like activity. Plays a major role in the degradation of misfolded proteins. This Fusobacterium nucleatum subsp. nucleatum (strain ATCC 25586 / DSM 15643 / BCRC 10681 / CIP 101130 / JCM 8532 / KCTC 2640 / LMG 13131 / VPI 4355) protein is ATP-dependent Clp protease proteolytic subunit.